A 169-amino-acid chain; its full sequence is 2-C-methyl-D-erythritol 2,4-cyclodiphosphate synthase (169 aa).

Residues Asp13 and His15 each contribute to the a divalent metal cation site. 4-CDP-2-C-methyl-D-erythritol 2-phosphate-binding positions include 13 to 15 and 39 to 40; these read DVH and HS. A divalent metal cation is bound at residue His47. 4-CDP-2-C-methyl-D-erythritol 2-phosphate is bound by residues 61-63, 66-70, Phe144, and Arg147; these read DIG and FPDTD.

This sequence belongs to the IspF family. In terms of assembly, homotrimer. It depends on a divalent metal cation as a cofactor.

It catalyses the reaction 4-CDP-2-C-methyl-D-erythritol 2-phosphate = 2-C-methyl-D-erythritol 2,4-cyclic diphosphate + CMP. It participates in isoprenoid biosynthesis; isopentenyl diphosphate biosynthesis via DXP pathway; isopentenyl diphosphate from 1-deoxy-D-xylulose 5-phosphate: step 4/6. Involved in the biosynthesis of isopentenyl diphosphate (IPP) and dimethylallyl diphosphate (DMAPP), two major building blocks of isoprenoid compounds. Catalyzes the conversion of 4-diphosphocytidyl-2-C-methyl-D-erythritol 2-phosphate (CDP-ME2P) to 2-C-methyl-D-erythritol 2,4-cyclodiphosphate (ME-CPP) with a corresponding release of cytidine 5-monophosphate (CMP). The sequence is that of 2-C-methyl-D-erythritol 2,4-cyclodiphosphate synthase from Cupriavidus pinatubonensis (strain JMP 134 / LMG 1197) (Cupriavidus necator (strain JMP 134)).